Consider the following 362-residue polypeptide: Carbamoyl phosphate synthase small chain (362 aa).

A CPSase region spans residues 1–172 (MKAFLVLDNG…SKYIFGTHTG (172 aa)). L-glutamine is bound by residues Ser45, Gly224, and Gly226. A Glutamine amidotransferase type-1 domain is found at 176 to 362 (KLAVYDYGVK…YDLVEKTKKG (187 aa)). The active-site Nucleophile is Cys252. L-glutamine contacts are provided by Leu253, Gln256, Asn294, Gly296, and Phe297. Residues His335 and Glu337 contribute to the active site.

The protein belongs to the CarA family. As to quaternary structure, composed of two chains; the small (or glutamine) chain promotes the hydrolysis of glutamine to ammonia, which is used by the large (or ammonia) chain to synthesize carbamoyl phosphate. Tetramer of heterodimers (alpha,beta)4.

It carries out the reaction hydrogencarbonate + L-glutamine + 2 ATP + H2O = carbamoyl phosphate + L-glutamate + 2 ADP + phosphate + 2 H(+). It catalyses the reaction L-glutamine + H2O = L-glutamate + NH4(+). It functions in the pathway amino-acid biosynthesis; L-arginine biosynthesis; carbamoyl phosphate from bicarbonate: step 1/1. Its pathway is pyrimidine metabolism; UMP biosynthesis via de novo pathway; (S)-dihydroorotate from bicarbonate: step 1/3. Its function is as follows. Small subunit of the glutamine-dependent carbamoyl phosphate synthetase (CPSase). CPSase catalyzes the formation of carbamoyl phosphate from the ammonia moiety of glutamine, carbonate, and phosphate donated by ATP, constituting the first step of 2 biosynthetic pathways, one leading to arginine and/or urea and the other to pyrimidine nucleotides. The small subunit (glutamine amidotransferase) binds and cleaves glutamine to supply the large subunit with the substrate ammonia. The polypeptide is Carbamoyl phosphate synthase small chain (Leptospira interrogans serogroup Icterohaemorrhagiae serovar Lai (strain 56601)).